The sequence spans 900 residues: Protein translocase subunit SecA (900 aa).

Residues Gln-87, 105–109 (GEGKT), and Asp-512 each bind ATP. The interval 849–900 (ERLAQQQQFSHQEEDSLNTGSPAQADRKIGRNDPCPCGSGKKYKQCHGRLQK) is disordered. Zn(2+)-binding residues include Cys-883, Cys-885, Cys-894, and His-895. Residues 889–900 (KKYKQCHGRLQK) show a composition bias toward basic residues.

It belongs to the SecA family. In terms of assembly, monomer and homodimer. Part of the essential Sec protein translocation apparatus which comprises SecA, SecYEG and auxiliary proteins SecDF-YajC and YidC. The cofactor is Zn(2+).

It localises to the cell inner membrane. The protein resides in the cytoplasm. The enzyme catalyses ATP + H2O + cellular proteinSide 1 = ADP + phosphate + cellular proteinSide 2.. In terms of biological role, part of the Sec protein translocase complex. Interacts with the SecYEG preprotein conducting channel. Has a central role in coupling the hydrolysis of ATP to the transfer of proteins into and across the cell membrane, serving both as a receptor for the preprotein-SecB complex and as an ATP-driven molecular motor driving the stepwise translocation of polypeptide chains across the membrane. In Pectobacterium atrosepticum (strain SCRI 1043 / ATCC BAA-672) (Erwinia carotovora subsp. atroseptica), this protein is Protein translocase subunit SecA.